Consider the following 489-residue polypeptide: NADH-quinone oxidoreductase subunit N (489 aa).

14 helical membrane-spanning segments follow: residues 8–28 (LIAM…MLSI), 35–55 (FTIA…LYYV), 75–95 (FFTA…YPWL), 105–125 (FYML…AHHL), 127–147 (SMFI…GYAF), 159–179 (YMLL…LLYA), 203–223 (VLAG…LFPF), 235–255 (PAPT…AVVM), 271–291 (MILG…ALTQ), 303–323 (VSHL…PILA), 329–349 (IYLA…AVAS), 374–394 (AVVM…LGFI), 407–427 (SLWW…FYYL), and 456–476 (LITL…QPLI).

Belongs to the complex I subunit 2 family. In terms of assembly, NDH-1 is composed of 13 different subunits. Subunits NuoA, H, J, K, L, M, N constitute the membrane sector of the complex.

It is found in the cell inner membrane. The enzyme catalyses a quinone + NADH + 5 H(+)(in) = a quinol + NAD(+) + 4 H(+)(out). In terms of biological role, NDH-1 shuttles electrons from NADH, via FMN and iron-sulfur (Fe-S) centers, to quinones in the respiratory chain. The immediate electron acceptor for the enzyme in this species is believed to be ubiquinone. Couples the redox reaction to proton translocation (for every two electrons transferred, four hydrogen ions are translocated across the cytoplasmic membrane), and thus conserves the redox energy in a proton gradient. This is NADH-quinone oxidoreductase subunit N from Proteus mirabilis (strain HI4320).